An 868-amino-acid polypeptide reads, in one-letter code: Leucine--tRNA ligase (868 aa).

A 'HIGH' region motif is present at residues 42-52 (PYPSGKLHMGH). The short motif at 627–631 (KMAKS) is the 'KMSKS' region element. Lysine 630 is an ATP binding site.

The protein belongs to the class-I aminoacyl-tRNA synthetase family.

It localises to the cytoplasm. It catalyses the reaction tRNA(Leu) + L-leucine + ATP = L-leucyl-tRNA(Leu) + AMP + diphosphate. The sequence is that of Leucine--tRNA ligase from Pseudomonas fluorescens (strain Pf0-1).